A 414-amino-acid chain; its full sequence is Esterase FrsA (414 aa).

It belongs to the FrsA family.

The catalysed reaction is a carboxylic ester + H2O = an alcohol + a carboxylate + H(+). In terms of biological role, catalyzes the hydrolysis of esters. In Citrobacter koseri (strain ATCC BAA-895 / CDC 4225-83 / SGSC4696), this protein is Esterase FrsA.